Reading from the N-terminus, the 217-residue chain is Nascent polypeptide-associated complex subunit alpha-like protein 2 (217 aa).

Positions Met1–Leu81 are disordered. Acidic residues predominate over residues Pro37–Ala60. One can recognise an NAC-A/B domain in the interval Ser70 to Leu135. Positions Val178–Leu215 constitute a UBA domain.

The protein belongs to the NAC-alpha family.

In terms of biological role, may promote appropriate targeting of ribosome-nascent polypeptide complexes. The sequence is that of Nascent polypeptide-associated complex subunit alpha-like protein 2 from Arabidopsis thaliana (Mouse-ear cress).